Here is a 190-residue protein sequence, read N- to C-terminus: Surfactant protein C (190 aa).

The propeptide occupies 1 to 23 (MDVGSKEVLIENPPDYSAAPQGR). Residue cysteine 28 is the site of S-palmitoyl cysteine attachment. Residues 59-190 (HMSQKHTEMV…LCGEVPLYYI (132 aa)) constitute a propeptide that is removed on maturation. Residues 94–190 (FSIGSTGIVV…LCGEVPLYYI (97 aa)) enclose the BRICHOS domain. Cysteine 121 and cysteine 182 are oxidised to a cystine.

Its subcellular location is the secreted. It is found in the extracellular space. The protein resides in the surface film. In terms of biological role, pulmonary surfactant associated proteins promote alveolar stability by lowering the surface tension at the air-liquid interface in the peripheral air spaces. This chain is Surfactant protein C (SFTPC), found in Neovison vison (American mink).